Consider the following 667-residue polypeptide: DNA ligase (667 aa).

NAD(+)-binding positions include 32-36 (DSEYD), 81-82 (SL), and glutamate 110. Lysine 112 serves as the catalytic N6-AMP-lysine intermediate. NAD(+) contacts are provided by arginine 133, glutamate 167, lysine 283, and lysine 307. Residues cysteine 401, cysteine 404, cysteine 419, and cysteine 424 each contribute to the Zn(2+) site. A BRCT domain is found at 586–667 (EGHPEFSGKT…FVDKQNELNS (82 aa)).

Belongs to the NAD-dependent DNA ligase family. LigA subfamily. Mg(2+) serves as cofactor. The cofactor is Mn(2+).

It catalyses the reaction NAD(+) + (deoxyribonucleotide)n-3'-hydroxyl + 5'-phospho-(deoxyribonucleotide)m = (deoxyribonucleotide)n+m + AMP + beta-nicotinamide D-nucleotide.. Functionally, DNA ligase that catalyzes the formation of phosphodiester linkages between 5'-phosphoryl and 3'-hydroxyl groups in double-stranded DNA using NAD as a coenzyme and as the energy source for the reaction. It is essential for DNA replication and repair of damaged DNA. This is DNA ligase from Staphylococcus aureus (strain Mu3 / ATCC 700698).